We begin with the raw amino-acid sequence, 87 residues long: Small ribosomal subunit protein bS20 (87 aa).

The tract at residues 1 to 27 (MANIKSAKKRAVQSEKRRKHNASRRSM) is disordered.

This sequence belongs to the bacterial ribosomal protein bS20 family.

Its function is as follows. Binds directly to 16S ribosomal RNA. In Pectobacterium carotovorum subsp. carotovorum (strain PC1), this protein is Small ribosomal subunit protein bS20.